The chain runs to 261 residues: Hemin import ATP-binding protein HmuV (261 aa).

Residues 3-239 (LDAADITVKL…AILSQAYGCA (237 aa)) form the ABC transporter domain. 35–42 (GPNGSGKT) is a binding site for ATP.

The protein belongs to the ABC transporter superfamily. Heme (hemin) importer (TC 3.A.1.14.5) family. As to quaternary structure, the complex is composed of two ATP-binding proteins (HmuV), two transmembrane proteins (HmuU) and a solute-binding protein (HmuT).

The protein resides in the cell inner membrane. Functionally, part of the ABC transporter complex HmuTUV involved in hemin import. Responsible for energy coupling to the transport system. The sequence is that of Hemin import ATP-binding protein HmuV from Roseobacter denitrificans (strain ATCC 33942 / OCh 114) (Erythrobacter sp. (strain OCh 114)).